A 317-amino-acid polypeptide reads, in one-letter code: Glutathione synthetase (317 aa).

An ATP-grasp domain is found at 124–310; that stretch reads EKLFTAWFPE…ITGKLMDAIE (187 aa). Residue 150 to 207 coordinates ATP; it reads FRQEHGDIILKPLDGMGGASIFRVKENDPNVSVIIETLTNHGQNYAMAQTFVPDISNG. Glu-281 and Asn-283 together coordinate Mg(2+).

This sequence belongs to the prokaryotic GSH synthase family. It depends on Mg(2+) as a cofactor. Mn(2+) serves as cofactor.

The enzyme catalyses gamma-L-glutamyl-L-cysteine + glycine + ATP = glutathione + ADP + phosphate + H(+). It functions in the pathway sulfur metabolism; glutathione biosynthesis; glutathione from L-cysteine and L-glutamate: step 2/2. This chain is Glutathione synthetase, found in Vibrio vulnificus (strain CMCP6).